The primary structure comprises 537 residues: Proline--tRNA ligase (537 aa).

Belongs to the class-II aminoacyl-tRNA synthetase family. ProS type 3 subfamily. As to quaternary structure, homodimer.

The protein resides in the cytoplasm. The catalysed reaction is tRNA(Pro) + L-proline + ATP = L-prolyl-tRNA(Pro) + AMP + diphosphate. Catalyzes the attachment of proline to tRNA(Pro) in a two-step reaction: proline is first activated by ATP to form Pro-AMP and then transferred to the acceptor end of tRNA(Pro). The sequence is that of Proline--tRNA ligase from Nanoarchaeum equitans (strain Kin4-M).